Reading from the N-terminus, the 248-residue chain is Phycocyanobilin:ferredoxin oxidoreductase (248 aa).

The protein belongs to the HY2 family.

The enzyme catalyses (2R,3Z)-phycocyanobilin + 4 oxidized [2Fe-2S]-[ferredoxin] = biliverdin IXalpha + 4 reduced [2Fe-2S]-[ferredoxin] + 4 H(+). Catalyzes the four-electron reduction of biliverdin IX-alpha (2-electron reduction at both the A and D rings); the reaction proceeds via an isolatable 2-electron intermediate, 181,182-dihydrobiliverdin. This is Phycocyanobilin:ferredoxin oxidoreductase (pcyA) from Synechococcus elongatus (strain ATCC 33912 / PCC 7942 / FACHB-805) (Anacystis nidulans R2).